A 127-amino-acid chain; its full sequence is MNQTVKVKKKKKTITLGVVHIRASFNNTIVTFTDIQGNTIASASAGGNGFKGARKATPYAAQVTIDRASEKAKEYGLKTISIRIGGPGAQRESAMRALFGQNFVVTSILDVSSIAHNGVRPPKRRRV.

Belongs to the universal ribosomal protein uS11 family. In terms of assembly, part of the 30S ribosomal subunit. Interacts with proteins S7 and S18. Binds to IF-3.

In terms of biological role, located on the platform of the 30S subunit, it bridges several disparate RNA helices of the 16S rRNA. Forms part of the Shine-Dalgarno cleft in the 70S ribosome. This chain is Small ribosomal subunit protein uS11, found in Rickettsia africae (strain ESF-5).